The primary structure comprises 348 residues: Dihydroorotase (348 aa).

Zn(2+) is bound by residues His17 and His19. Substrate-binding positions include 19-21 and Asn45; that span reads HLR. Lys103, His140, and His178 together coordinate Zn(2+). At Lys103 the chain carries N6-carboxylysine. His140 provides a ligand contact to substrate. Residue Leu223 participates in substrate binding. Asp251 contacts Zn(2+). Asp251 is a catalytic residue. Substrate-binding residues include His255 and Ala267.

It belongs to the metallo-dependent hydrolases superfamily. DHOase family. Class II DHOase subfamily. In terms of assembly, homodimer. Requires Zn(2+) as cofactor.

The enzyme catalyses (S)-dihydroorotate + H2O = N-carbamoyl-L-aspartate + H(+). It functions in the pathway pyrimidine metabolism; UMP biosynthesis via de novo pathway; (S)-dihydroorotate from bicarbonate: step 3/3. Catalyzes the reversible cyclization of carbamoyl aspartate to dihydroorotate. The protein is Dihydroorotase of Salmonella arizonae (strain ATCC BAA-731 / CDC346-86 / RSK2980).